Here is a 204-residue protein sequence, read N- to C-terminus: Colicin-A (204 aa).

2 helical membrane-spanning segments follow: residues 139 to 161 (SWVL…LGAY) and 165 to 187 (LGVP…GALI).

It belongs to the channel forming colicin family.

It localises to the cell membrane. In terms of biological role, this colicin is a channel-forming colicin. This class of transmembrane toxins depolarize the cytoplasmic membrane, leading to dissipation of cellular energy. Colicins are polypeptide toxins produced by and active against E.coli and closely related bacteria. This Escherichia coli protein is Colicin-A (caa).